A 976-amino-acid chain; its full sequence is Vacuolar membrane protease (976 aa).

Residues 1–15 (MKLKSVFRSVLKYRK) lie on the Cytoplasmic side of the membrane. The chain crosses the membrane as a helical span at residues 16-36 (TNLSLLLLITYSIITLLYIFD). At 37–359 (HERYKLNLPK…KFFVISAKTL (323 aa)) the chain is on the vacuolar side. N-linked (GlcNAc...) asparagine glycans are attached at residues Asn96 and Asn121. 2 residues coordinate Zn(2+): His156 and Asp168. N-linked (GlcNAc...) asparagine glycosylation is present at Asn189. Glu200 (proton acceptor) is an active-site residue. Glu201 is a binding site for Zn(2+). N-linked (GlcNAc...) asparagine glycosylation occurs at Asn217. Glu226 and His300 together coordinate Zn(2+). The chain crosses the membrane as a helical span at residues 360 to 380 (FYWNCIFLLVSPVVAIGLYLI). Topologically, residues 381-392 (SRDRMTWKSYSW) are cytoplasmic. Residues 393–412 (LSWTRFPLSLAAGIIVQKLF) traverse the membrane as a helical segment. Residues 413-428 (SNDIIRSNPLTFSRNY) lie on the Vacuolar side of the membrane. Residues 429–449 (FWPISAFFTQVIFTSYVLINC) form a helical membrane-spanning segment. Residues 450–461 (SNFFFPCADMKS) lie on the Cytoplasmic side of the membrane. A helical membrane pass occupies residues 462-482 (LSIIELFIILWTILLFTSKLL). Residues 483-496 (YSSDYRYTGLYPLS) lie on the Vacuolar side of the membrane. A helical membrane pass occupies residues 497–517 (IFFLLSTIAAILRLLALALGM). Over 518–627 (RTRKRLGREC…NSLKLEYTDY (110 aa)) the chain is Cytoplasmic. Positions 528 to 610 (RDHHSNYSSH…PLLKGSNSME (83 aa)) are disordered. A compositionally biased stretch (polar residues) spans 549–558 (NLEQPQDQLT). Residues 559–570 (SSQDDQASIQDD) show a composition bias toward low complexity. Residues 582-601 (NVDEDHGMDSSSQQHDERVP) are compositionally biased toward basic and acidic residues. Residues 628-648 (AWIIQFLLIVPIPSFILFNSV) traverse the membrane as a helical segment. Residues 649-668 (DVIMDALNHTVQEGSKATFD) are Vacuolar-facing. Residue Asn656 is glycosylated (N-linked (GlcNAc...) asparagine). A helical membrane pass occupies residues 669–689 (VLRFGMVGSILIALPILPFFY). Topologically, residues 690–692 (KVN) are cytoplasmic. A helical transmembrane segment spans residues 693–713 (YITISLTALLFLISASKTLLV). Over 714–976 (HPFTNSNPLK…LVIVKDAIIL (263 aa)) the chain is Vacuolar. 5 N-linked (GlcNAc...) asparagine glycosylation sites follow: Asn768, Asn796, Asn811, Asn866, and Asn937.

Belongs to the peptidase M28 family. Zn(2+) serves as cofactor. In terms of processing, N-glycosylated.

It is found in the vacuole membrane. In terms of biological role, may be involved in vacuolar sorting and osmoregulation. In Saccharomyces cerevisiae (strain ATCC 204508 / S288c) (Baker's yeast), this protein is Vacuolar membrane protease.